Here is a 485-residue protein sequence, read N- to C-terminus: Glycogen synthase (485 aa).

Lysine 20 contributes to the ADP-alpha-D-glucose binding site.

Belongs to the glycosyltransferase 1 family. Bacterial/plant glycogen synthase subfamily.

It carries out the reaction [(1-&gt;4)-alpha-D-glucosyl](n) + ADP-alpha-D-glucose = [(1-&gt;4)-alpha-D-glucosyl](n+1) + ADP + H(+). It participates in glycan biosynthesis; glycogen biosynthesis. Functionally, synthesizes alpha-1,4-glucan chains using ADP-glucose. This Vibrio vulnificus (strain CMCP6) protein is Glycogen synthase.